Reading from the N-terminus, the 361-residue chain is MAGNTIGQLFRVTTFGESHGIALGCIVDGVPPGIPLTEEDLQHDLDRRRPGTSRYTTPRREPDRVKILSGVFEGRTTGTSIGLLIENTDQRSQDYGAIKELYRPGHADFTYDGKYGFRDYRGGGRSSARETAMRVAAGAIAKKYLDMKHGIKVRGYLAQMGDVVCELKDWQQVEQNPFFSPDVDKLDALDELMRALKKEGDSIGAKVAVMAENVPVGLGEPVFDRLDADLAHALMSINAVKGVEIGDGFAVVNQRGSEHRDEIRANGFQSNHAGGILGGISSGQTITANLAMKPTSSITVPGKTITRSGEEVEMITKGRHDPCVGIRAVPIAEAMMAIVLMDHLLRHRAQNADVHVDMPHG.

The interval 37-59 (TEEDLQHDLDRRRPGTSRYTTPR) is disordered. A compositionally biased stretch (basic and acidic residues) spans 40-49 (DLQHDLDRRR). Positions 48 and 54 each coordinate NADP(+). Residues 125 to 127 (RSS), 238 to 239 (NA), Gly-278, 293 to 297 (KPTSS), and Arg-319 each bind FMN.

This sequence belongs to the chorismate synthase family. As to quaternary structure, homotetramer. Requires FMNH2 as cofactor.

The enzyme catalyses 5-O-(1-carboxyvinyl)-3-phosphoshikimate = chorismate + phosphate. It functions in the pathway metabolic intermediate biosynthesis; chorismate biosynthesis; chorismate from D-erythrose 4-phosphate and phosphoenolpyruvate: step 7/7. Functionally, catalyzes the anti-1,4-elimination of the C-3 phosphate and the C-6 proR hydrogen from 5-enolpyruvylshikimate-3-phosphate (EPSP) to yield chorismate, which is the branch point compound that serves as the starting substrate for the three terminal pathways of aromatic amino acid biosynthesis. This reaction introduces a second double bond into the aromatic ring system. This chain is Chorismate synthase, found in Erwinia tasmaniensis (strain DSM 17950 / CFBP 7177 / CIP 109463 / NCPPB 4357 / Et1/99).